Here is a 330-residue protein sequence, read N- to C-terminus: MPLLDIRNLTIEFKTGDEWVKAVDRVSMTLTEGEIRGLVGESGSGKSLIAKAICGVNKDNWRVTADRMRFDDIDLLRLSARERRKLVGHNVSMIFQEPQSCLDPSERVGRQLMQNIPAWTYKGRWWQRFGWRKRRAIELLHRVGIKDHKDAMRSFPYELTEGECQKVMIAIALANQPRLLIADEPTNSMEPTTQAQIFRLLTRLNQNSNTTILLISHDLQMLSQWADKINVLYCGQTVETAPSKELVTMPHHPYTQALIRAIPDFGSAMPHKSRLNTLPGAIPLLEQLPIGCRLGPRCPYAQRECIVTPRLTGAKNHLYACHFPLNMEKE.

The ABC transporter domain maps to 6–259 (IRNLTIEFKT…PHHPYTQALI (254 aa)). 40-47 (GESGSGKS) contributes to the ATP binding site.

This sequence belongs to the ABC transporter superfamily.

It is found in the cell inner membrane. Its function is as follows. Involved in a peptide intake transport system that plays a role in the resistance to antimicrobial peptides. This is Peptide transport system ATP-binding protein SapD (sapD) from Escherichia coli O157:H7.